Consider the following 142-residue polypeptide: Coactosin-like protein (142 aa).

Ala2 is subject to N-acetylalanine. Residues 2-130 form the ADF-H domain; sequence ATKIDKEACR…EEDFIRSELK (129 aa). Residues 66 to 75 form a flexible and important for F-actin binding region; the sequence is TGDAMSKRSK. Lys102 is modified (N6-acetyllysine). Ser141 is subject to Phosphoserine.

This sequence belongs to the actin-binding proteins ADF family. Coactosin subfamily. Interacts with 5-lipoxygenase (ALOX5/5LO) in a calcium-independent manner. Binds to F-actin with a stoichiometry of 1:2.

The protein resides in the cytoplasm. Its subcellular location is the cytoskeleton. The protein localises to the nucleus. In terms of biological role, binds to F-actin in a calcium-independent manner. Has no direct effect on actin depolymerization. Acts as a chaperone for ALOX5 (5LO), influencing both its stability and activity in leukotrienes synthesis. The sequence is that of Coactosin-like protein (Cotl1) from Mus musculus (Mouse).